The primary structure comprises 301 residues: uncharacterized protein (301 aa).

The Extracellular segment spans residues 1 to 5 (MSYKK). Residues 6–26 (FVYFINLFFLLGATLLTFFLI) form a helical membrane-spanning segment. Over 27 to 112 (LAGGRTTGVL…NRNAYYYLSR (86 aa)) the chain is Cytoplasmic. Residues 113 to 133 (VGWAMLLIGLFFLLITLVSVI) traverse the membrane as a helical segment. The Extracellular segment spans residues 134 to 143 (ASLIRYNRRT). The chain crosses the membrane as a helical span at residues 144–164 (AALATAMSWITLFFITLSACL). Residues 165-191 (YTGCYAKAVKAFHHENRDARLGPKNFG) lie on the Cytoplasmic side of the membrane. The chain crosses the membrane as a helical span at residues 192 to 212 (LIWTTVFLLIVNAICCTIMVA). The Extracellular portion of the chain corresponds to 213-301 (THKRNEYIYD…YTEQNVPVVS (89 aa)). The disordered stretch occupies residues 254-301 (VQQSQSHQNHRFFKKLRTKKRTVTSAGDEPDRVQEERVYTEQNVPVVS). A compositionally biased stretch (basic residues) spans 261–275 (QNHRFFKKLRTKKRT). Positions 282–292 (EPDRVQEERVY) are enriched in basic and acidic residues.

This sequence belongs to the SUR7 family.

It is found in the cell membrane. In terms of biological role, involved in sporulation and affects the sphingolipid composition of the plasma membrane. This is an uncharacterized protein from Saccharomyces cerevisiae (strain ATCC 204508 / S288c) (Baker's yeast).